The primary structure comprises 245 residues: Orotidine 5'-phosphate decarboxylase (245 aa).

Substrate is bound by residues Asp-22, Lys-44, 71-80 (DLKFHDIPNT), Thr-131, Arg-192, Gln-201, Gly-221, and Arg-222. Catalysis depends on Lys-73, which acts as the Proton donor.

This sequence belongs to the OMP decarboxylase family. Type 1 subfamily. Homodimer.

The enzyme catalyses orotidine 5'-phosphate + H(+) = UMP + CO2. It functions in the pathway pyrimidine metabolism; UMP biosynthesis via de novo pathway; UMP from orotate: step 2/2. Catalyzes the decarboxylation of orotidine 5'-monophosphate (OMP) to uridine 5'-monophosphate (UMP). The polypeptide is Orotidine 5'-phosphate decarboxylase (Escherichia coli (strain 55989 / EAEC)).